The primary structure comprises 605 residues: Elongation factor 4 (605 aa).

One can recognise a tr-type G domain in the interval 9–191 (DTIRNFCIIA…AIIKRVPAPV (183 aa)). Residues 21-26 (DHGKST) and 138-141 (NKID) contribute to the GTP site.

It belongs to the TRAFAC class translation factor GTPase superfamily. Classic translation factor GTPase family. LepA subfamily.

The protein resides in the cell inner membrane. The catalysed reaction is GTP + H2O = GDP + phosphate + H(+). Functionally, required for accurate and efficient protein synthesis under certain stress conditions. May act as a fidelity factor of the translation reaction, by catalyzing a one-codon backward translocation of tRNAs on improperly translocated ribosomes. Back-translocation proceeds from a post-translocation (POST) complex to a pre-translocation (PRE) complex, thus giving elongation factor G a second chance to translocate the tRNAs correctly. Binds to ribosomes in a GTP-dependent manner. This chain is Elongation factor 4, found in Chlorobium phaeobacteroides (strain BS1).